The sequence spans 103 residues: Large ribosomal subunit protein bL21 (103 aa).

The protein belongs to the bacterial ribosomal protein bL21 family. Part of the 50S ribosomal subunit. Contacts protein L20.

Its function is as follows. This protein binds to 23S rRNA in the presence of protein L20. This Cupriavidus necator (strain ATCC 17699 / DSM 428 / KCTC 22496 / NCIMB 10442 / H16 / Stanier 337) (Ralstonia eutropha) protein is Large ribosomal subunit protein bL21.